The chain runs to 543 residues: Cytochrome P450 monooxygenase sphH (543 aa).

Transmembrane regions (helical) follow at residues 1 to 21 (MGPI…SVYF) and 32 to 52 (IATF…YQLF). C487 serves as a coordination point for heme.

The protein belongs to the cytochrome P450 family. Heme is required as a cofactor.

The protein resides in the membrane. The catalysed reaction is presphingofungin + 2 reduced [NADPH--hemoprotein reductase] + O2 = sphingofungin B1 + 2 oxidized [NADPH--hemoprotein reductase] + H2O + 2 H(+). It participates in secondary metabolite biosynthesis. Functionally, cytochrome P450 monooxygenase; part of the gene cluster that mediates the biosynthesis of sphingofungins, bioactive molecules acting as sphingolipid inhibitors via inhibiting serine palmitoyl transferase (SPT). Within the pathway, sphH catalyzes the conversion of presphingofungin into sphingofungin B1 via hydroxylagtion at position C-14. Sphingofungin biosynthesis starts with the PKS sphB that produces an C18 polyketide precursor 3-hydroxyoctadeca-4,10-dienoyl-ACP containing one delta-6 desaturation and one delta-12 desaturation. The aminoacyl transferase sphA uses the sphB product to produce 3-keto-presphingofungin by adding an aminomalonate molecule. SphF then reduces the C-3 ketone of 3-keto-presphingofungin which leads to presphingofungin. The cytochrome P450 monooxygenase sphH converts presphingofungin into sphingofungin B1 which is further converted to sphingofungin B by the dioxygenase sphC. SphC is also able to convert presphingofungin into sphingofungin B2. The acetyltransferase sphE acetylates sphingofungin B to produce sphingofungin C, but can also convert sphingofungin B1 into sphingofungin C1 and sphingofungin B2 into sphingofungin C2. Finally, sphingofungin C can be spontaneously converted into sphingofungin D. This Aspergillus fumigatus (strain CBS 144.89 / FGSC A1163 / CEA10) (Neosartorya fumigata) protein is Cytochrome P450 monooxygenase sphH.